The sequence spans 428 residues: Light-independent protochlorophyllide reductase subunit N (428 aa).

Positions 31, 56, and 117 each coordinate [4Fe-4S] cluster.

It belongs to the BchN/ChlN family. Protochlorophyllide reductase is composed of three subunits; BchL, BchN and BchB. Forms a heterotetramer of two BchB and two BchN subunits. [4Fe-4S] cluster is required as a cofactor.

The enzyme catalyses chlorophyllide a + oxidized 2[4Fe-4S]-[ferredoxin] + 2 ADP + 2 phosphate = protochlorophyllide a + reduced 2[4Fe-4S]-[ferredoxin] + 2 ATP + 2 H2O. The protein operates within porphyrin-containing compound metabolism; bacteriochlorophyll biosynthesis (light-independent). Functionally, component of the dark-operative protochlorophyllide reductase (DPOR) that uses Mg-ATP and reduced ferredoxin to reduce ring D of protochlorophyllide (Pchlide) to form chlorophyllide a (Chlide). This reaction is light-independent. The NB-protein (BchN-BchB) is the catalytic component of the complex. The protein is Light-independent protochlorophyllide reductase subunit N of Rhodopseudomonas palustris (strain HaA2).